Here is a 150-residue protein sequence, read N- to C-terminus: Cytochrome c oxidase subunit 5A, mitochondrial (150 aa).

Residues 1–41 (MLGAALRRCAVAATTWAGPRGHLHSARTPGPAAAIQSVRCY) constitute a mitochondrion transit peptide. Residues 2-17 (LGAALRRCAVAATTWA) carry the SIFI-degron motif. 2 positions are modified to N6-acetyllysine: Lys87 and Lys113. At Thr141 the chain carries Phosphothreonine.

This sequence belongs to the cytochrome c oxidase subunit 5A family. In terms of assembly, component of the cytochrome c oxidase (complex IV, CIV), a multisubunit enzyme composed of 14 subunits. The complex is composed of a catalytic core of 3 subunits MT-CO1, MT-CO2 and MT-CO3, encoded in the mitochondrial DNA, and 11 supernumerary subunits COX4I, COX5A, COX5B, COX6A, COX6B, COX6C, COX7A, COX7B, COX7C, COX8 and NDUFA4, which are encoded in the nuclear genome. The complex exists as a monomer or a dimer and forms supercomplexes (SCs) in the inner mitochondrial membrane with NADH-ubiquinone oxidoreductase (complex I, CI) and ubiquinol-cytochrome c oxidoreductase (cytochrome b-c1 complex, complex III, CIII), resulting in different assemblies (supercomplex SCI(1)III(2)IV(1) and megacomplex MCI(2)III(2)IV(2)). Interacts with AFG1L. Interacts with RAB5IF. In terms of processing, in response to mitochondrial stress, the precursor protein is ubiquitinated by the SIFI complex in the cytoplasm before mitochondrial import, leading to its degradation. Within the SIFI complex, UBR4 initiates ubiquitin chain that are further elongated or branched by KCMF1.

It localises to the mitochondrion inner membrane. It functions in the pathway energy metabolism; oxidative phosphorylation. Its function is as follows. Component of the cytochrome c oxidase, the last enzyme in the mitochondrial electron transport chain which drives oxidative phosphorylation. The respiratory chain contains 3 multisubunit complexes succinate dehydrogenase (complex II, CII), ubiquinol-cytochrome c oxidoreductase (cytochrome b-c1 complex, complex III, CIII) and cytochrome c oxidase (complex IV, CIV), that cooperate to transfer electrons derived from NADH and succinate to molecular oxygen, creating an electrochemical gradient over the inner membrane that drives transmembrane transport and the ATP synthase. Cytochrome c oxidase is the component of the respiratory chain that catalyzes the reduction of oxygen to water. Electrons originating from reduced cytochrome c in the intermembrane space (IMS) are transferred via the dinuclear copper A center (CU(A)) of subunit 2 and heme A of subunit 1 to the active site in subunit 1, a binuclear center (BNC) formed by heme A3 and copper B (CU(B)). The BNC reduces molecular oxygen to 2 water molecules using 4 electrons from cytochrome c in the IMS and 4 protons from the mitochondrial matrix. The protein is Cytochrome c oxidase subunit 5A, mitochondrial (COX5A) of Symphalangus syndactylus (Siamang).